A 954-amino-acid chain; its full sequence is Glycine dehydrogenase (decarboxylating) (954 aa).

At lysine 704 the chain carries N6-(pyridoxal phosphate)lysine.

Belongs to the GcvP family. As to quaternary structure, the glycine cleavage system is composed of four proteins: P, T, L and H. The cofactor is pyridoxal 5'-phosphate.

It carries out the reaction N(6)-[(R)-lipoyl]-L-lysyl-[glycine-cleavage complex H protein] + glycine + H(+) = N(6)-[(R)-S(8)-aminomethyldihydrolipoyl]-L-lysyl-[glycine-cleavage complex H protein] + CO2. The glycine cleavage system catalyzes the degradation of glycine. The P protein binds the alpha-amino group of glycine through its pyridoxal phosphate cofactor; CO(2) is released and the remaining methylamine moiety is then transferred to the lipoamide cofactor of the H protein. The chain is Glycine dehydrogenase (decarboxylating) from Rhizobium etli (strain ATCC 51251 / DSM 11541 / JCM 21823 / NBRC 15573 / CFN 42).